The sequence spans 150 residues: MRAVVQRVLSASVAAGSSRHSEIGRGLLVLLGVAQGDTELEAEWMSRKIVQLRIFDDAAGRMNLPVRDTGGDILLVSQFTLYGDASRGNRPGFSGSADFEKARPLYEKAVRSIEQHLGKPVMTGWYGEAMQVALINDGPVTLILDTPQRL.

Positions 138 to 139 match the Gly-cisPro motif, important for rejection of L-amino acids motif; it reads GP.

This sequence belongs to the DTD family. In terms of assembly, homodimer.

The protein localises to the cytoplasm. It carries out the reaction glycyl-tRNA(Ala) + H2O = tRNA(Ala) + glycine + H(+). The enzyme catalyses a D-aminoacyl-tRNA + H2O = a tRNA + a D-alpha-amino acid + H(+). In terms of biological role, an aminoacyl-tRNA editing enzyme that deacylates mischarged D-aminoacyl-tRNAs. Also deacylates mischarged glycyl-tRNA(Ala), protecting cells against glycine mischarging by AlaRS. Acts via tRNA-based rather than protein-based catalysis; rejects L-amino acids rather than detecting D-amino acids in the active site. By recycling D-aminoacyl-tRNA to D-amino acids and free tRNA molecules, this enzyme counteracts the toxicity associated with the formation of D-aminoacyl-tRNA entities in vivo and helps enforce protein L-homochirality. This is D-aminoacyl-tRNA deacylase from Chlorobium limicola (strain DSM 245 / NBRC 103803 / 6330).